Here is a 557-residue protein sequence, read N- to C-terminus: Iron-sulfur cluster assembly SufBD family protein ABCI8, chloroplastic (557 aa).

The segment at 1-47 (MASLLANGISSFSPQPTSDSSKSPKGFHPKPESLKFPSPKSLNPTRP) is disordered. The transit peptide at 1-52 (MASLLANGISSFSPQPTSDSSKSPKGFHPKPESLKFPSPKSLNPTRPIFKLR) directs the protein to the chloroplast. A compositionally biased stretch (low complexity) spans 10–24 (SSFSPQPTSDSSKSP).

This sequence belongs to the iron-sulfur cluster assembly SufBD family.

Its subcellular location is the plastid. The protein resides in the chloroplast. Involved in light signaling, probably by mediating the transport and correct distribution of protoporphyrin IX, a chlorophyll precursor, in response to far-red light. The chain is Iron-sulfur cluster assembly SufBD family protein ABCI8, chloroplastic (ABCI8) from Arabidopsis thaliana (Mouse-ear cress).